The sequence spans 61 residues: MTKGTPSFGRMSRGKTHIRCPRCGRHSYNIVKGYCAACGYGRSRRIKRGLAKVLGRPVGNR.

Residues C20, C23, C35, and C38 each contribute to the Zn(2+) site. The C4-type zinc finger occupies 20–38 (CPRCGRHSYNIVKGYCAAC).

This sequence belongs to the eukaryotic ribosomal protein eL37 family. Requires Zn(2+) as cofactor.

In terms of biological role, binds to the 23S rRNA. The sequence is that of Large ribosomal subunit protein eL37 from Caldivirga maquilingensis (strain ATCC 700844 / DSM 13496 / JCM 10307 / IC-167).